Here is a 320-residue protein sequence, read N- to C-terminus: Beta-carotene ketolase (320 aa).

The enzyme catalyses all-trans-beta-carotene + 2 AH2 + 2 O2 = echinenone + 2 A + 3 H2O. It catalyses the reaction echinenone + 2 AH2 + 2 O2 = canthaxanthin + 2 A + 3 H2O. Its pathway is carotenoid biosynthesis; astaxanthin biosynthesis. Functionally, converts beta-carotene to canthaxanthin via echinenone. In Haematococcus lacustris (Green alga), this protein is Beta-carotene ketolase.